The chain runs to 906 residues: DNA gyrase subunit A (906 aa).

A Topo IIA-type catalytic domain is found at 35–524; that stretch reads IPDVRDGLKP…GEFDQDIEDL (490 aa). The O-(5'-phospho-DNA)-tyrosine intermediate role is filled by Y123. A GyrA-box motif is present at residues 551–557; it reads QKRGGKG. The interval 886-906 is disordered; sequence SESEEDSELEEDLEQAEEVYT.

Belongs to the type II topoisomerase GyrA/ParC subunit family. Heterotetramer, composed of two GyrA and two GyrB chains. In the heterotetramer, GyrA contains the active site tyrosine that forms a transient covalent intermediate with DNA, while GyrB binds cofactors and catalyzes ATP hydrolysis.

The protein localises to the cytoplasm. It carries out the reaction ATP-dependent breakage, passage and rejoining of double-stranded DNA.. Its function is as follows. A type II topoisomerase that negatively supercoils closed circular double-stranded (ds) DNA in an ATP-dependent manner to modulate DNA topology and maintain chromosomes in an underwound state. Negative supercoiling favors strand separation, and DNA replication, transcription, recombination and repair, all of which involve strand separation. Also able to catalyze the interconversion of other topological isomers of dsDNA rings, including catenanes and knotted rings. Type II topoisomerases break and join 2 DNA strands simultaneously in an ATP-dependent manner. This chain is DNA gyrase subunit A, found in Rickettsia felis (strain ATCC VR-1525 / URRWXCal2) (Rickettsia azadi).